Here is a 309-residue protein sequence, read N- to C-terminus: Foldase protein PrsA 2 (309 aa).

The signal sequence occupies residues 1-20; sequence MKYRLIGVGASLVVAVMLTG. A lipid anchor (N-palmitoyl cysteine) is attached at C21. C21 carries S-diacylglycerol cysteine lipidation. Positions 137-232 constitute a PpiC domain; that stretch reads MPMTTVQHIA…TADTKDKPTY (96 aa).

This sequence belongs to the PrsA family.

It localises to the cell membrane. The enzyme catalyses [protein]-peptidylproline (omega=180) = [protein]-peptidylproline (omega=0). Functionally, plays a major role in protein secretion by helping the post-translocational extracellular folding of several secreted proteins. In Lactiplantibacillus plantarum (strain ATCC BAA-793 / NCIMB 8826 / WCFS1) (Lactobacillus plantarum), this protein is Foldase protein PrsA 2 (prsA2).